Consider the following 393-residue polypeptide: NAD(P)H-quinone oxidoreductase subunit H, chloroplastic (393 aa).

It belongs to the complex I 49 kDa subunit family. As to quaternary structure, NDH is composed of at least 16 different subunits, 5 of which are encoded in the nucleus. Interacts with the chaperonin CNP60B4 subunit.

It is found in the plastid. It localises to the chloroplast thylakoid membrane. It catalyses the reaction a plastoquinone + NADH + (n+1) H(+)(in) = a plastoquinol + NAD(+) + n H(+)(out). It carries out the reaction a plastoquinone + NADPH + (n+1) H(+)(in) = a plastoquinol + NADP(+) + n H(+)(out). NDH shuttles electrons from NAD(P)H:plastoquinone, via FMN and iron-sulfur (Fe-S) centers, to quinones in the photosynthetic chain and possibly in a chloroplast respiratory chain. The immediate electron acceptor for the enzyme in this species is believed to be plastoquinone. Couples the redox reaction to proton translocation, and thus conserves the redox energy in a proton gradient. This Arabidopsis thaliana (Mouse-ear cress) protein is NAD(P)H-quinone oxidoreductase subunit H, chloroplastic.